Consider the following 1070-residue polypeptide: DNA-directed RNA polymerase subunit beta (1070 aa).

This sequence belongs to the RNA polymerase beta chain family. As to quaternary structure, in plastids the minimal PEP RNA polymerase catalytic core is composed of four subunits: alpha, beta, beta', and beta''. When a (nuclear-encoded) sigma factor is associated with the core the holoenzyme is formed, which can initiate transcription.

It localises to the plastid. Its subcellular location is the chloroplast. The enzyme catalyses RNA(n) + a ribonucleoside 5'-triphosphate = RNA(n+1) + diphosphate. Its function is as follows. DNA-dependent RNA polymerase catalyzes the transcription of DNA into RNA using the four ribonucleoside triphosphates as substrates. In Morus indica (Mulberry), this protein is DNA-directed RNA polymerase subunit beta.